Here is a 935-residue protein sequence, read N- to C-terminus: Protocadherin gamma-A11 (935 aa).

An N-terminal signal peptide occupies residues 1 to 29 (MANRLQRGDRSRLLLLLCIFLGTLRGFRA). Cadherin domains lie at 30 to 134 (RQIR…APSF), 135 to 243 (QEDE…IPMF), 244 to 348 (TQSV…APEI), 349 to 453 (TITS…PPVF), 454 to 563 (PHSS…APEI), and 571 to 677 (DGST…ADLG). Residues 30 to 693 (RQIRYSVPEE…NSEASDLSLY (664 aa)) are Extracellular-facing. Asparagine 48 carries N-linked (GlcNAc...) asparagine glycosylation. Asparagine 255, asparagine 266, asparagine 420, and asparagine 546 each carry an N-linked (GlcNAc...) asparagine glycan. Residues 694-714 (LVVAVAAVSCIFLVFVIVLLA) traverse the membrane as a helical segment. Over 715 to 935 (LRLWRWHKSR…KKKSGKKEKK (221 aa)) the chain is Cytoplasmic. Disordered stretches follow at residues 805-844 (CDPT…WPNN) and 905-935 (ATLT…KEKK). Polar residues predominate over residues 807 to 844 (PTSNQQAPPNTDWRFSQAQRPGTSGSQNGDDTGTWPNN). Positions 925–935 (NKKKSGKKEKK) are enriched in basic residues.

It is found in the cell membrane. In terms of biological role, potential calcium-dependent cell-adhesion protein. May be involved in the establishment and maintenance of specific neuronal connections in the brain. This chain is Protocadherin gamma-A11 (PCDHGA11), found in Pan troglodytes (Chimpanzee).